The sequence spans 343 residues: Calcium/calmodulin-dependent protein kinase type 1B (343 aa).

The region spanning 15-270 (YEIREKLGSG…CQQALQHLWI (256 aa)) is the Protein kinase domain. Residues 21–29 (LGSGAFSEV) and Lys44 contribute to the ATP site. Asp136 functions as the Proton acceptor in the catalytic mechanism. Positions 290 to 311 (KNFARTHWKRAFNATSFLRHIR) are calmodulin-binding. Residues 314 to 343 (GQSPEGEEASRQGMTRHSHPGLGTSQSPKW) are disordered. Ser338 bears the Phosphoserine mark.

Belongs to the protein kinase superfamily. CAMK Ser/Thr protein kinase family. CaMK subfamily. Post-translationally, isoform 1 and isoform 2 are phosphorylated by CAMKK1. In terms of tissue distribution, isoform 1 is expressed in liver, heart, lung, kidney, spleen and testis. Isoform 2 is predominantly expressed in cerebrum and cerebellum.

It is found in the cytoplasm. It localises to the nucleus. It catalyses the reaction L-seryl-[protein] + ATP = O-phospho-L-seryl-[protein] + ADP + H(+). It carries out the reaction L-threonyl-[protein] + ATP = O-phospho-L-threonyl-[protein] + ADP + H(+). Its activity is regulated as follows. Activated by Ca(2+)/calmodulin. Must be phosphorylated to be maximally active. Activated by CAMKK1. Calcium/calmodulin-dependent protein kinase belonging to a proposed calcium-triggered signaling cascade. In vitro, isoform 1 and isoform 2 phosphorylate CREB1, SYN1/synapsin I. Phosphorylates and activates CAMK1. This chain is Calcium/calmodulin-dependent protein kinase type 1B (Pnck), found in Rattus norvegicus (Rat).